The primary structure comprises 455 residues: Guanine/hypoxanthine permease GhxQ (455 aa).

Residues 1 to 31 are Cytoplasmic-facing; that stretch reads MSGDILQTPDAPKPQGALDNYFKITARGSTV. A helical transmembrane segment spans residues 32–55; it reads RQEVLAGLTTFLAMVYSVIVVPGM. Topologically, residues 56–65 are periplasmic; the sequence is LGKAGFPPAA. Residues 66–84 form a helical membrane-spanning segment; the sequence is VFVATCLVAGFGSLLMGLW. The Cytoplasmic portion of the chain corresponds to 85–86; the sequence is AN. Residues 87 to 103 form a discontinuously helical membrane-spanning segment; that stretch reads LPMAIGCAISLTAFTAF. The Periplasmic portion of the chain corresponds to 104-115; sequence SLVLGQQISVPV. The helical transmembrane segment at 116–135 threads the bilayer; sequence ALGAVFLMGVIFTAISVTGV. At 136–147 the chain is on the cytoplasmic side; sequence RTWILRNLPMGI. A helical membrane pass occupies residues 148-168; it reads AHGTGIGIGLFLLLIAANGVG. The Periplasmic segment spans residues 169–186; the sequence is MVIKNPIEGLPVALGAFT. Residues 187 to 204 form a helical membrane-spanning segment; the sequence is SFPVMMSLLGLAVIFGLE. Topologically, residues 205-208 are cytoplasmic; it reads KCRV. Residues 209–228 traverse the membrane as a helical segment; that stretch reads PGGILLVIIAISIIGLIFDP. Residues 229–260 lie on the Periplasmic side of the membrane; that stretch reads AVKYHGLVAMPSLTGEDGKSLIFSLDIMGALQ. A helical membrane pass occupies residues 261 to 289; the sequence is PTVLPSVLALVMTAVFDATGTIRAVAGQA. Over 290–302 the chain is Cytoplasmic; the sequence is NLLDKDNQIINGG. Residues 303-318 form a helical membrane-spanning segment; sequence KALTSDSVSSIFSGLV. Topologically, residues 319 to 320 are periplasmic; the sequence is GA. Residues 321–336 form a discontinuously helical membrane-spanning segment; that stretch reads APAAVYIESAAGTAAG. Residues 337–340 lie on the Cytoplasmic side of the membrane; the sequence is GKTG. Residues 341-355 traverse the membrane as a helical segment; the sequence is LTATVVGALFLLILF. The Periplasmic segment spans residues 356 to 366; that stretch reads LSPLSFLIPGY. The helical transmembrane segment at 367-386 threads the bilayer; the sequence is ATAPALMYVGLLMLSNVSKL. Residues 387–391 are Cytoplasmic-facing; it reads DFNDF. An intramembrane region (discontinuously helical) is located at residues 392 to 427; it reads IDAMAGLVCAVFIVLTCNIVTGIMLGFVTLVVGRVF. The Cytoplasmic portion of the chain corresponds to 428 to 455; it reads AREWQKLNIGTVIITAALVAFYAGGWAI.

It belongs to the nucleobase:cation symporter-2 (NCS2) (TC 2.A.40) family. Azg-like subfamily.

The protein resides in the cell membrane. Its function is as follows. High-affinity transporter for guanine and hypoxanthine. This Escherichia coli (strain K12) protein is Guanine/hypoxanthine permease GhxQ (ghxQ).